The chain runs to 134 residues: Large ribosomal subunit protein eL32 (134 aa).

It belongs to the eukaryotic ribosomal protein eL32 family.

The protein is Large ribosomal subunit protein eL32 (RpL32) of Spodoptera frugiperda (Fall armyworm).